We begin with the raw amino-acid sequence, 1726 residues long: Transcription elongation factor SPT6 (1726 aa).

3 stretches are compositionally biased toward acidic residues: residues 1 to 14 (MSDF…ESEE), 32 to 49 (EEED…DDQD), and 59 to 80 (NDDD…DSED). The interval 1 to 197 (MSDFVESEAE…DDGQPLKKPK (197 aa)) is disordered. Position 2 is an N-acetylserine (S2). An interaction with IWS1 region spans residues 2–485 (SDFVESEAEE…PKMQNAAKAS (484 aa)). Positions 2–916 (SDFVESEAEE…PPVLRQAVSL (915 aa)) are interaction with PAAF1. The stretch at 3 to 51 (DFVESEAEESEEEYNHEGEVVPRVTKKFVEEEDDDEEEEEENLDDQDER) forms a coiled coil. S7 and S12 each carry phosphoserine. S73, S78, and S91 each carry phosphoserine. Acidic residues predominate over residues 95 to 105 (RLEDDDFDLIE). The segment covering 111-122 (KVKRGQKYRRVK) has biased composition (basic residues). The residue at position 125 (S125) is a Phosphoserine. 3 stretches are compositionally biased toward acidic residues: residues 126-136 (DDDEDDEEEYG), 150-160 (FQDEEGEEGQE), and 169-190 (PDEE…DDDG). S267 bears the Phosphoserine mark. The interval 317-1300 (ADWIYRNAFA…NEWKLPKDTY (984 aa)) is interaction with KDM6A. The interval 489–520 (LKRIKEDGDEEGEGEEAEDEEQRGPELKQASR) is disordered. The segment covering 495-509 (DGDEEGEGEEAEDEE) has biased composition (acidic residues). Basic and acidic residues predominate over residues 510-520 (QRGPELKQASR). K743 carries the post-translational modification N6-acetyllysine. An S1 motif domain is found at 1213–1282 (WNHFDSGSCP…EKFSADLTCR (70 aa)). In terms of domain architecture, SH2 spans 1325-1431 (YIKRVIAHPS…FARDLLNHKY (107 aa)). Phosphotyrosine is present on Y1515. T1523 is subject to Phosphothreonine. The residue at position 1526 (S1526) is a Phosphoserine. Phosphothreonine is present on residues T1530 and T1532. S1535 is modified (phosphoserine). T1539 bears the Phosphothreonine mark. The interaction with histone H2B and H3 stretch occupies residues 1633 to 1726 (PQYHQLQAST…ATPLLDEMDR (94 aa)). The segment at 1636–1726 (HQLQASTTPQ…ATPLLDEMDR (91 aa)) is disordered. Residues 1639–1664 (QASTTPQSTQAQPQPSSSSRQRQQQP) are compositionally biased toward low complexity. K1676 is subject to N6-acetyllysine. Residue T1697 is modified to Phosphothreonine. Phosphoserine occurs at positions 1701 and 1703. A phosphothreonine mark is found at T1709 and T1718.

The protein belongs to the SPT6 family. Interacts with RNA polymerase II and the DRB sensitivity-inducing factor complex (DSIF complex), which is composed of SUPT5H and SUPT4H1 or SUPT4H2. Interacts with PAAF1. Interacts with histone H2B and H3. Interacts (via SH2 domain) with POLR2A phosphorylated at 'Ser-2'. Interacts (via SH2 domain) with SETD1A. Interacts with IWS1, KDM6A and AICDA. Interacts with WDR43. In terms of processing, dephosphorylated at Ser-1530 by the PNUTS-PP1 complex during RNA polymerase II transcription pause-release. Ubiquitously expressed.

The protein resides in the nucleus. Histone H3-H4 chaperone that plays a key role in the regulation of transcription elongation and mRNA processing. Enhances the transcription elongation by RNA polymerase II (RNAPII) and is also required for the efficient activation of transcriptional elongation by the HIV-1 nuclear transcriptional activator, Tat. Besides chaperoning histones in transcription, acts to transport and splice mRNA by forming a complex with IWS1 and the C-terminal domain (CTD) of the RNAPII subunit RPB1 (POLR2A). The SUPT6H:IWS1:CTD complex recruits mRNA export factors (ALYREF/THOC4, EXOSC10) as well as histone modifying enzymes (such as SETD2), to ensure proper mRNA splicing, efficient mRNA export and elongation-coupled H3K36 methylation, a signature chromatin mark of active transcription. SUPT6H via its association with SETD1A, regulates both class-switch recombination and somatic hypermutation through formation of H3K4me3 epigenetic marks on activation-induced cytidine deaminase (AICDA) target loci. Promotes the activation of the myogenic gene program by entailing erasure of the repressive H3K27me3 epigenetic mark through stabilization of the chromatin interaction of the H3K27 demethylase KDM6A. The protein is Transcription elongation factor SPT6 (Supt6h) of Mus musculus (Mouse).